The sequence spans 183 residues: Apo-citrate lyase phosphoribosyl-dephospho-CoA transferase (183 aa).

This sequence belongs to the CitX family.

It carries out the reaction apo-[citrate lyase ACP] + 2'-(5''-triphospho-alpha-D-ribosyl)-3'-dephospho-CoA = holo-[citrate lyase ACP] + diphosphate. Transfers 2-(5''-triphosphoribosyl)-3'-dephosphocoenzyme-A on a serine residue to the apo-acyl carrier protein (gamma chain) of the citrate lyase to yield holo-acyl carrier protein. The chain is Apo-citrate lyase phosphoribosyl-dephospho-CoA transferase from Escherichia coli (strain SMS-3-5 / SECEC).